The following is a 362-amino-acid chain: Chorismate synthase (362 aa).

NADP(+) contacts are provided by arginine 48 and arginine 54. FMN contacts are provided by residues 125-127 (RSS), 238-239 (NA), glycine 278, 293-297 (KPTSS), and arginine 319.

The protein belongs to the chorismate synthase family. As to quaternary structure, homotetramer. FMNH2 is required as a cofactor.

The enzyme catalyses 5-O-(1-carboxyvinyl)-3-phosphoshikimate = chorismate + phosphate. It functions in the pathway metabolic intermediate biosynthesis; chorismate biosynthesis; chorismate from D-erythrose 4-phosphate and phosphoenolpyruvate: step 7/7. Functionally, catalyzes the anti-1,4-elimination of the C-3 phosphate and the C-6 proR hydrogen from 5-enolpyruvylshikimate-3-phosphate (EPSP) to yield chorismate, which is the branch point compound that serves as the starting substrate for the three terminal pathways of aromatic amino acid biosynthesis. This reaction introduces a second double bond into the aromatic ring system. The sequence is that of Chorismate synthase from Tolumonas auensis (strain DSM 9187 / NBRC 110442 / TA 4).